The primary structure comprises 570 residues: CDKN2A-interacting protein (570 aa).

Alanine 2 is subject to N-acetylalanine. An XRN2-binding (XTBD) domain is found at 19-126 (VETLRCEGET…KVKKRGISSS (108 aa)). Positions 122–345 (GISSSNEGVE…TSLLMPKSSS (224 aa)) are disordered. Position 124 is a phosphoserine (serine 124). Basic and acidic residues predominate over residues 147-162 (VERDHGKKSAKTDRSA). The segment covering 167–183 (SSGSKGSSTKSESSGTS) has biased composition (low complexity). Residue lysine 176 forms a Glycyl lysine isopeptide (Lys-Gly) (interchain with G-Cter in SUMO1) linkage. Positions 184 to 198 (ARSNSGVSHQNSSTS) are enriched in polar residues. A compositionally biased stretch (low complexity) spans 203-221 (SVCSQSSSNSSQVTSAGSG). Positions 224–233 (SEPEAPDKHG) are enriched in basic and acidic residues. Position 234 is a phosphoserine (serine 234). Composition is skewed to low complexity over residues 234 to 248 (SASF…SLNS) and 271 to 301 (SSVS…PLLS). Residues 302–317 (CKSSSETASSGLTTKA) are compositionally biased toward polar residues. Positions 318–345 (SSEANISSSVSKNSSSSGTSLLMPKSSS) are enriched in low complexity. At serine 378 the chain carries Phosphoserine. Positions 383-407 (SQLASKSSSQSSTSQLPSKSTSQSS) are disordered. In terms of domain architecture, DRBM spans 452-527 (NHGELLNAAI…SREALKLFLK (76 aa)).

It belongs to the CARF family. In terms of assembly, interacts with CDKN2A/p14ARF, p53/TP53 and MDM2. Interacts with CHEK2 and MAPK3. Interacts with XRN2. May be ubiquitinated.

It is found in the nucleus. The protein localises to the nucleoplasm. In terms of biological role, regulates DNA damage response and cell proliferation in a dose-dependent manner through a number of signaling pathways involved in cell proliferation, apoptosis and senescence. The polypeptide is CDKN2A-interacting protein (Cdkn2aip) (Rattus norvegicus (Rat)).